Consider the following 545-residue polypeptide: MMTGQVPILVLKEGTQREQGKNAQRNNIEAAKAIADAVRTTLGPKGMDKMLVDSIGDIIISNDGATILKEMDVEHPTAKMIVEVSKAQDTAVGDGTTTAVVLSGELLKQAETLLDQGVHPTVISNGYRLAVNEARKIIDEIAEKSTDDATLRKIALTALSGKNTGLSNDFLADLVVKAVNAVAEVRDGKTIVDTANIKVDKKNGGSVNDTQFISGIVIDKEKVHSKMPDVVKNAKIALIDSALEIKKTEIEAKVQISDPSKIQDFLNQETNTFKQMVEKIKKSGANVVLCQKGIDDVAQHYLAKEGIYAVRRVKKSDMEKLAKATGAKIVTDLDDLTPSVLGEAETVEERKIGDDRMTFVMGCKNPKAVSILIRGGTDHVVSEVERALNDAIRVVAITKEDGKFLWGGGAVEAELAMRLAKYANSVGGREQLAIEAFAKALEIIPRTLAENAGIDPINTLIKLKAEHEKGRISVGVDLDNNGVGDMKAKGVVDPLRVKTHALESAVEVATMILRIDDVIASKKSTPPSGQGGQGQGMPGGGMPEY.

Residues K522–Y545 are disordered. Gly residues predominate over residues G529–Y545.

Belongs to the TCP-1 chaperonin family. Forms a Heterooligomeric complex of two stacked eight-membered rings. Post-translationally, the N-terminus is blocked.

In terms of biological role, molecular chaperone; binds unfolded polypeptides in vitro, and has a weak ATPase activity. The protein is Thermosome subunit alpha (thsA) of Thermoplasma acidophilum (strain ATCC 25905 / DSM 1728 / JCM 9062 / NBRC 15155 / AMRC-C165).